Consider the following 239-residue polypeptide: Ribonuclease PH (239 aa).

Phosphate is bound by residues Arg86 and 124–126 (GTR).

This sequence belongs to the RNase PH family. Homohexameric ring arranged as a trimer of dimers.

The catalysed reaction is tRNA(n+1) + phosphate = tRNA(n) + a ribonucleoside 5'-diphosphate. Functionally, phosphorolytic 3'-5' exoribonuclease that plays an important role in tRNA 3'-end maturation. Removes nucleotide residues following the 3'-CCA terminus of tRNAs; can also add nucleotides to the ends of RNA molecules by using nucleoside diphosphates as substrates, but this may not be physiologically important. Probably plays a role in initiation of 16S rRNA degradation (leading to ribosome degradation) during starvation. This Azoarcus sp. (strain BH72) protein is Ribonuclease PH.